Consider the following 100-residue polypeptide: Urease subunit gamma (100 aa).

Belongs to the urease gamma subunit family. In terms of assembly, heterotrimer of UreA (gamma), UreB (beta) and UreC (alpha) subunits. Three heterotrimers associate to form the active enzyme.

It is found in the cytoplasm. It carries out the reaction urea + 2 H2O + H(+) = hydrogencarbonate + 2 NH4(+). It participates in nitrogen metabolism; urea degradation; CO(2) and NH(3) from urea (urease route): step 1/1. The chain is Urease subunit gamma from Pseudomonas fluorescens (strain Pf0-1).